A 130-amino-acid chain; its full sequence is Large ribosomal subunit protein bL17 (130 aa).

Belongs to the bacterial ribosomal protein bL17 family. As to quaternary structure, part of the 50S ribosomal subunit. Contacts protein L32.

This is Large ribosomal subunit protein bL17 from Delftia acidovorans (strain DSM 14801 / SPH-1).